A 1241-amino-acid polypeptide reads, in one-letter code: Intraflagellar transport protein 122 homolog (1241 aa).

4 WD repeats span residues 10–50 (KAEH…QPLK), 51–91 (GHKD…LKYT), 93–129 (NDAI…VSKH), and 131–169 (SSSK…KVKI). Residues 222-246 (VYSSQGSEAEEEEPEEEDDSPRDDN) are disordered. Acidic residues predominate over residues 229-242 (EAEEEEPEEEDDSP). WD repeat units follow at residues 278–317 (ALNF…LGTV), 319–359 (EQNS…HGLY), and 512–551 (KQAT…LLFQ).

As to quaternary structure, component of the IFT complex A (IFT-A) complex. IFT-A complex is divided into a core subcomplex composed of IFT122:IFT140:WDR19 which is associated with TULP3 and a peripheral subcomplex composed of IFT43:WDR35:TTC21B. Interacts with IFT43:WDR35; the interaction connects the 2 IFT-A subcomplexes. Interacts with IFTAP; the interaction associates IFTAP with IFT-A complex. As to expression, expressed in many tissues. Predominant expression in testis and pituitary.

The protein resides in the cell projection. Its subcellular location is the cilium. It is found in the cytoplasm. It localises to the cytoskeleton. The protein localises to the cilium basal body. Its function is as follows. As a component of the IFT complex A (IFT-A), a complex required for retrograde ciliary transport and entry into cilia of G protein-coupled receptors (GPCRs), it is required in ciliogenesis and ciliary protein trafficking. Involved in cilia formation during neuronal patterning. Acts as a negative regulator of Shh signaling. Required to recruit TULP3 to primary cilia. This Homo sapiens (Human) protein is Intraflagellar transport protein 122 homolog.